Reading from the N-terminus, the 521-residue chain is Bifunctional purine biosynthesis protein PurH (521 aa).

The region spanning 1 to 145 (MIKQALISVS…KNHRDVTVVV (145 aa)) is the MGS-like domain.

The protein belongs to the PurH family.

The catalysed reaction is (6R)-10-formyltetrahydrofolate + 5-amino-1-(5-phospho-beta-D-ribosyl)imidazole-4-carboxamide = 5-formamido-1-(5-phospho-D-ribosyl)imidazole-4-carboxamide + (6S)-5,6,7,8-tetrahydrofolate. It catalyses the reaction IMP + H2O = 5-formamido-1-(5-phospho-D-ribosyl)imidazole-4-carboxamide. The protein operates within purine metabolism; IMP biosynthesis via de novo pathway; 5-formamido-1-(5-phospho-D-ribosyl)imidazole-4-carboxamide from 5-amino-1-(5-phospho-D-ribosyl)imidazole-4-carboxamide (10-formyl THF route): step 1/1. Its pathway is purine metabolism; IMP biosynthesis via de novo pathway; IMP from 5-formamido-1-(5-phospho-D-ribosyl)imidazole-4-carboxamide: step 1/1. In Burkholderia cenocepacia (strain HI2424), this protein is Bifunctional purine biosynthesis protein PurH.